A 734-amino-acid chain; its full sequence is Photosystem I P700 chlorophyll a apoprotein A2 (734 aa).

Transmembrane regions (helical) follow at residues 46–69, 135–158, 175–199, 273–291, 330–353, 369–395, 417–439, and 517–535; these read IFAS…FHVA, LYNG…LHLQ, LNHH…HVAI, IAHH…GHMY, IHFQ…QHMY, AALY…IFFI, AIIS…LYVH, and FLVH…LILV. Residues Cys-559 and Cys-568 each contribute to the [4Fe-4S] cluster site. 2 consecutive transmembrane segments (helical) span residues 575 to 596 and 643 to 665; these read AFYL…YWHW and LSVW…MFLI. Residues His-654, Met-662, and Tyr-670 each contribute to the chlorophyll a site. Trp-671 is a binding site for phylloquinone. The chain crosses the membrane as a helical span at residues 707–727; sequence LVGLAHFSVGYIFTYAAFLIA.

This sequence belongs to the PsaA/PsaB family. In terms of assembly, the PsaA/B heterodimer binds the P700 chlorophyll special pair and subsequent electron acceptors. PSI consists of a core antenna complex that captures photons, and an electron transfer chain that converts photonic excitation into a charge separation. The eukaryotic PSI reaction center is composed of at least 11 subunits. It depends on P700 is a chlorophyll a/chlorophyll a' dimer, A0 is one or more chlorophyll a, A1 is one or both phylloquinones and FX is a shared 4Fe-4S iron-sulfur center. as a cofactor.

It is found in the plastid. The protein resides in the chloroplast thylakoid membrane. It carries out the reaction reduced [plastocyanin] + hnu + oxidized [2Fe-2S]-[ferredoxin] = oxidized [plastocyanin] + reduced [2Fe-2S]-[ferredoxin]. PsaA and PsaB bind P700, the primary electron donor of photosystem I (PSI), as well as the electron acceptors A0, A1 and FX. PSI is a plastocyanin-ferredoxin oxidoreductase, converting photonic excitation into a charge separation, which transfers an electron from the donor P700 chlorophyll pair to the spectroscopically characterized acceptors A0, A1, FX, FA and FB in turn. Oxidized P700 is reduced on the lumenal side of the thylakoid membrane by plastocyanin. In Morus indica (Mulberry), this protein is Photosystem I P700 chlorophyll a apoprotein A2.